The chain runs to 237 residues: Endonuclease NucS (237 aa).

It belongs to the NucS endonuclease family.

Its subcellular location is the cytoplasm. Functionally, cleaves both 3' and 5' ssDNA extremities of branched DNA structures. This Saccharolobus islandicus (strain L.S.2.15 / Lassen #1) (Sulfolobus islandicus) protein is Endonuclease NucS.